Reading from the N-terminus, the 346-residue chain is Uroporphyrinogen decarboxylase (346 aa).

Substrate-binding positions include 21 to 25 (RQAGR), phenylalanine 40, aspartate 71, tyrosine 146, serine 201, and histidine 316.

This sequence belongs to the uroporphyrinogen decarboxylase family. As to quaternary structure, homodimer.

It is found in the cytoplasm. The catalysed reaction is uroporphyrinogen III + 4 H(+) = coproporphyrinogen III + 4 CO2. Its pathway is porphyrin-containing compound metabolism; protoporphyrin-IX biosynthesis; coproporphyrinogen-III from 5-aminolevulinate: step 4/4. Its function is as follows. Catalyzes the decarboxylation of four acetate groups of uroporphyrinogen-III to yield coproporphyrinogen-III. The protein is Uroporphyrinogen decarboxylase of Rickettsia conorii (strain ATCC VR-613 / Malish 7).